Reading from the N-terminus, the 275-residue chain is MAIRSYRILTPDTRNRSVSGFDGRVQLDPQKKLTSGQHHCGSRNGRGIITARHRGGGHKRLYRQIDFRRDKEHISGKIVTIEYDPNRSAYICKVHYKNGDKMYILHPRGVMIGDTILSGPKAPISIGNALPLTNMPLGTAIHNIEITLGKGGQLARAAGAVAELIAKEDRSATLRLPSGEVRLISENCSATIGQVGNITANNRSFGKAGAKRWLGKRSEVRGVAMNPVDHPHGGGEGRTPIGRKKPVTPWGYSALGKKSRKRNRYSDASILRRRE.

Positions 224–275 are disordered; it reads AMNPVDHPHGGGEGRTPIGRKKPVTPWGYSALGKKSRKRNRYSDASILRRRE.

This sequence belongs to the universal ribosomal protein uL2 family. As to quaternary structure, part of the 50S ribosomal subunit.

The protein resides in the plastid. It localises to the chloroplast. The polypeptide is Large ribosomal subunit protein uL2c (rpl2) (Picea abies (Norway spruce)).